The following is a 340-amino-acid chain: Alpha-1,4-N-acetylglucosaminyltransferase (340 aa).

Over 1-4 (MRKE) the chain is Cytoplasmic. A helical; Signal-anchor for type II membrane protein membrane pass occupies residues 5–25 (LQLSLSVTLLLVCGFLYQFTL). Residues 26–340 (KSSCLFCLPS…VTGELGPGNK (315 aa)) lie on the Lumenal side of the membrane. N-linked (GlcNAc...) asparagine glycosylation is found at Asn99 and Asn138. Positions 167-169 (DTD) match the DXD motif motif. N-linked (GlcNAc...) asparagine glycosylation is found at Asn251 and Asn282.

Belongs to the glycosyltransferase 32 family. As to expression, detected in stomach and pancreas.

It is found in the golgi apparatus membrane. It participates in protein modification; protein glycosylation. Functionally, catalyzes the transfer of N-acetylglucosamine (GlcNAc) to core 2 branched O-glycans. Necessary for the synthesis of type III mucin which is specifically produced in the stomach, duodenum, and pancreatic duct. May protect against inflammation-associated gastric adenocarcinomas. The chain is Alpha-1,4-N-acetylglucosaminyltransferase (A4GNT) from Homo sapiens (Human).